Here is a 215-residue protein sequence, read N- to C-terminus: Variable small protein 6 (215 aa).

An N-terminal signal peptide occupies residues 1–18; sequence MRKRISAIIMTLFMVFMS. Residue C19 is the site of N-palmitoyl cysteine attachment. A lipid anchor (S-diacylglycerol cysteine) is attached at C19.

Belongs to the variable small protein (Vsp) family.

It is found in the cell outer membrane. In terms of biological role, the Vlp and Vsp proteins are antigenically distinct proteins, only one vlp or vsp gene is transcriptionally active at any one time. Switching between these genes is a mechanism of host immune response evasion. This Borrelia hermsii protein is Variable small protein 6.